A 133-amino-acid polypeptide reads, in one-letter code: Mediator of RNA polymerase II transcription subunit 10 (133 aa).

Positions 1 to 13 (MSTEASTGETPEF) are enriched in polar residues. Residues 1 to 28 (MSTEASTGETPEFQSYDHRGSPTQEAMK) are disordered. The segment covering 15-28 (SYDHRGSPTQEAMK) has biased composition (basic and acidic residues).

Belongs to the Mediator complex subunit 10 family. In terms of assembly, component of the Mediator complex.

It is found in the nucleus. Functionally, component of the Mediator complex, a coactivator involved in the regulated transcription of nearly all RNA polymerase II-dependent genes. Mediator functions as a bridge to convey information from gene-specific regulatory proteins to the basal RNA polymerase II transcription machinery. Mediator is recruited to promoters by direct interactions with regulatory proteins and serves as a scaffold for the assembly of a functional preinitiation complex with RNA polymerase II and the general transcription factors. The sequence is that of Mediator of RNA polymerase II transcription subunit 10 (NUT2) from Phaeosphaeria nodorum (strain SN15 / ATCC MYA-4574 / FGSC 10173) (Glume blotch fungus).